We begin with the raw amino-acid sequence, 238 residues long: Deoxyribose-phosphate aldolase (238 aa).

Aspartate 104 functions as the Proton donor/acceptor in the catalytic mechanism. Residue lysine 168 is the Schiff-base intermediate with acetaldehyde of the active site. Lysine 197 functions as the Proton donor/acceptor in the catalytic mechanism.

This sequence belongs to the DeoC/FbaB aldolase family. DeoC type 1 subfamily.

Its subcellular location is the cytoplasm. The catalysed reaction is 2-deoxy-D-ribose 5-phosphate = D-glyceraldehyde 3-phosphate + acetaldehyde. It participates in carbohydrate degradation; 2-deoxy-D-ribose 1-phosphate degradation; D-glyceraldehyde 3-phosphate and acetaldehyde from 2-deoxy-alpha-D-ribose 1-phosphate: step 2/2. Catalyzes a reversible aldol reaction between acetaldehyde and D-glyceraldehyde 3-phosphate to generate 2-deoxy-D-ribose 5-phosphate. This is Deoxyribose-phosphate aldolase from Bacteroides thetaiotaomicron (strain ATCC 29148 / DSM 2079 / JCM 5827 / CCUG 10774 / NCTC 10582 / VPI-5482 / E50).